The following is a 148-amino-acid chain: Ribosome maturation factor RimP (148 aa).

The protein belongs to the RimP family.

The protein resides in the cytoplasm. Functionally, required for maturation of 30S ribosomal subunits. The polypeptide is Ribosome maturation factor RimP (Treponema denticola (strain ATCC 35405 / DSM 14222 / CIP 103919 / JCM 8153 / KCTC 15104)).